We begin with the raw amino-acid sequence, 634 residues long: ATP-dependent zinc metalloprotease FtsH (634 aa).

At 1–5 (MNALK) the chain is on the cytoplasmic side. The helical transmembrane segment at 6–26 (NFFIWAIIIGAAIVAFNLFEG) threads the bilayer. Over 27 to 100 (KREFTTKVSL…VANPEPPGGW (74 aa)) the chain is Periplasmic. The helical transmembrane segment at 101–121 (LVNVFLSWLPILFFIGIWIFL) threads the bilayer. At 122–634 (LRQMSGGGNV…KSEEVKEEVV (513 aa)) the chain is on the cytoplasmic side. 195 to 202 (GEPGVGKT) contributes to the ATP binding site. A Zn(2+)-binding site is contributed by His-418. Glu-419 is a catalytic residue. Positions 422 and 496 each coordinate Zn(2+). The segment at 615–634 (DRKSEENKELKSEEVKEEVV) is disordered.

It in the central section; belongs to the AAA ATPase family. The protein in the C-terminal section; belongs to the peptidase M41 family. In terms of assembly, the isolated protease domain (residues 405-634) forms a stable hexamer. Zn(2+) serves as cofactor.

The protein localises to the cell inner membrane. Its function is as follows. Acts as a processive, ATP-dependent zinc metallopeptidase for both cytoplasmic and membrane proteins. Plays a role in the quality control of integral membrane proteins. The protein is ATP-dependent zinc metalloprotease FtsH of Aquifex aeolicus (strain VF5).